The chain runs to 336 residues: Ferredoxin--NADP reductase 1 (336 aa).

7 residues coordinate FAD: Glu-37, Lys-45, Phe-50, Val-90, Leu-125, Asp-287, and Thr-328.

This sequence belongs to the ferredoxin--NADP reductase type 2 family. Homodimer. FAD serves as cofactor.

It carries out the reaction 2 reduced [2Fe-2S]-[ferredoxin] + NADP(+) + H(+) = 2 oxidized [2Fe-2S]-[ferredoxin] + NADPH. The protein is Ferredoxin--NADP reductase 1 (ycgT) of Bacillus subtilis (strain 168).